A 196-amino-acid chain; its full sequence is MPIGVPKVPFRSPGEEDASWVDVYNRLYRERLLFLGQEVDSEISNQLIGLMVYLSIENDNKDLYLFINSPGGWVIPGVAIYDTMQFVQPDVHTICMGLAASMGSFVLVGGEITKRLAFPHARVMIHQPASSFYEAQTGEFILEAEELLKLRETITRVYVQRTGKPLWVVSEDMERDVFMSATEAQAHGIVDLVAIE.

The Nucleophile role is filled by S101. H126 is a catalytic residue.

This sequence belongs to the peptidase S14 family. As to quaternary structure, component of the chloroplastic Clp protease core complex.

The protein localises to the plastid. Its subcellular location is the chloroplast stroma. The enzyme catalyses Hydrolysis of proteins to small peptides in the presence of ATP and magnesium. alpha-casein is the usual test substrate. In the absence of ATP, only oligopeptides shorter than five residues are hydrolyzed (such as succinyl-Leu-Tyr-|-NHMec, and Leu-Tyr-Leu-|-Tyr-Trp, in which cleavage of the -Tyr-|-Leu- and -Tyr-|-Trp bonds also occurs).. Functionally, cleaves peptides in various proteins in a process that requires ATP hydrolysis. Has a chymotrypsin-like activity. Plays a major role in the degradation of misfolded proteins. The sequence is that of ATP-dependent Clp protease proteolytic subunit from Eucalyptus globulus subsp. globulus (Tasmanian blue gum).